The following is a 227-amino-acid chain: Esterase Rv3036c (227 aa).

The chain crosses the membrane as a helical span at residues 3-23 (YLIATAVLVAVVLVGWPAAGA).

The protein belongs to the RsiV family.

Its subcellular location is the cell membrane. It is found in the secreted. It localises to the cell wall. It catalyses the reaction a fatty acid ester + H2O = an aliphatic alcohol + a fatty acid + H(+). The enzyme catalyses an acetyl ester + H2O = an aliphatic alcohol + acetate + H(+). It carries out the reaction a butanoate ester + H2O = an aliphatic alcohol + butanoate + H(+). The catalysed reaction is a hexanoate ester + H2O = an aliphatic alcohol + hexanoate + H(+). It catalyses the reaction a dodecanoate ester + H2O = an aliphatic alcohol + dodecanoate + H(+). The enzyme catalyses a tetradecanoate ester + H2O = an aliphatic alcohol + tetradecanoate + H(+). It carries out the reaction an octanoate ester + H2O = an aliphatic alcohol + octanoate + H(+). Its function is as follows. Hydrolyzes ester substrates carbon chain lengths ranging from C2 to C14. In vitro, acetate (C2), butyrate (C4) and caprylate (C6) are hydrolyzed with high efficiency. Has lower activity against laurate (C12), myristate (C14) and caproate (C8), and weak activity against palmitate (C16). In Mycobacterium tuberculosis (strain ATCC 25618 / H37Rv), this protein is Esterase Rv3036c.